Here is a 237-residue protein sequence, read N- to C-terminus: Uridylate kinase (237 aa).

12-15 contributes to the ATP binding site; that stretch reads KISG. Glycine 54 is a UMP binding site. Residues glycine 55 and arginine 59 each coordinate ATP. UMP-binding positions include aspartate 72 and 133–140; that span reads TGNPFFST. ATP contacts are provided by tyrosine 166 and aspartate 169.

It belongs to the UMP kinase family. As to quaternary structure, homohexamer.

The protein localises to the cytoplasm. The catalysed reaction is UMP + ATP = UDP + ADP. It functions in the pathway pyrimidine metabolism; CTP biosynthesis via de novo pathway; UDP from UMP (UMPK route): step 1/1. Inhibited by UTP. Functionally, catalyzes the reversible phosphorylation of UMP to UDP. The polypeptide is Uridylate kinase (Caldanaerobacter subterraneus subsp. tengcongensis (strain DSM 15242 / JCM 11007 / NBRC 100824 / MB4) (Thermoanaerobacter tengcongensis)).